Reading from the N-terminus, the 373-residue chain is MSKRQLVKQSRRWVIKIGSALLTNNGRGLDREEMAVWVKQMAALSKRGYEVVLVSSGAVAAGMTRLGWAERPKALHELQAAAAVGQSSLIQAYEQEFQKYSIKTAQILLDHDDLSNRQRYLNARSTLRTLTKLGVIPIVNENDTVVTDEIRFGDNDTLGALVANLIEADTLCILTDQKAMFDSDPRQNALAKMLIERSAFDPGLDAMAGDGGALGRGGMISKVRAARLAARSGANTIVVGGKVFDVIPRVASGEILGTLLYSESQPIAARKRWLAGNMQPRGRLTLDDGAVKVLREQGKSLLPVGVRAVEGYFTRGELVLCEDTAGREIARGLVNYSSDETNKIKGASSSRIDSLLGYKDYDELIHRDNLVLV.

Residue Lys-16 coordinates ATP. Substrate is bound by residues Ser-56, Asp-143, and Asn-155. Position 175–176 (175–176 (TD)) interacts with ATP. In terms of domain architecture, PUA spans 281 to 359 (RGRLTLDDGA…SRIDSLLGYK (79 aa)).

This sequence belongs to the glutamate 5-kinase family.

It localises to the cytoplasm. The enzyme catalyses L-glutamate + ATP = L-glutamyl 5-phosphate + ADP. Its pathway is amino-acid biosynthesis; L-proline biosynthesis; L-glutamate 5-semialdehyde from L-glutamate: step 1/2. In terms of biological role, catalyzes the transfer of a phosphate group to glutamate to form L-glutamate 5-phosphate. In Saccharophagus degradans (strain 2-40 / ATCC 43961 / DSM 17024), this protein is Glutamate 5-kinase.